Reading from the N-terminus, the 323-residue chain is DNA-directed RNA polymerase subunit alpha 1 (323 aa).

The tract at residues Met-1 to Arg-228 is alpha N-terminal domain (alpha-NTD). The alpha C-terminal domain (alpha-CTD) stretch occupies residues Ile-244–Lys-323.

Belongs to the RNA polymerase alpha chain family. Homodimer. The RNAP catalytic core consists of 2 alpha, 1 beta, 1 beta' and 1 omega subunit. When a sigma factor is associated with the core the holoenzyme is formed, which can initiate transcription.

The enzyme catalyses RNA(n) + a ribonucleoside 5'-triphosphate = RNA(n+1) + diphosphate. In terms of biological role, DNA-dependent RNA polymerase catalyzes the transcription of DNA into RNA using the four ribonucleoside triphosphates as substrates. The sequence is that of DNA-directed RNA polymerase subunit alpha 1 from Francisella tularensis subsp. novicida (strain U112).